We begin with the raw amino-acid sequence, 933 residues long: Collagen alpha-2(I) chain (933 aa).

Over residues 1-16 the composition is skewed to gly residues; sequence SGGFDFGVGLGPGPMG. 2 disordered regions span residues 1-191 and 206-933; these read SGGF…LTGA and LPGP…AGVR. A compositionally biased stretch (low complexity) spans 17-53; that stretch reads LMGPRGPPGASGAPGPQGFQGPAGEPGEPGQTGPAGA. P24 and P30 each carry 4-hydroxyproline. Residues 57–72 are compositionally biased toward basic and acidic residues; it reads KAGEDGHPGKPGRPGE. The residue at position 94 (K94) is a 5-hydroxylysine; alternate. K94 carries an O-linked (Gal...) hydroxylysine; alternate glycan. Composition is skewed to low complexity over residues 108-137, 162-176, and 213-228; these read VGAP…SAGP, AGPR…VSGP, and PGPV…RGLV. Residues 280 to 289 show a composition bias toward gly residues; that stretch reads GLRGGPGSRG. 4-hydroxyproline occurs at positions 317 and 320. The span at 413-422 shows a compositional bias: gly residues; that stretch reads GVQGGKGEQG. 2 stretches are compositionally biased toward low complexity: residues 468-485 and 497-507; these read PGES…SRGP and EPGVVGAPGTA. The span at 508-517 shows a compositional bias: gly residues; it reads GPAGSGGLPG. Composition is skewed to low complexity over residues 540-584, 591-611, and 627-640; these read VGTT…PRGS, VGPA…QPGA, and PTGP…SGPN. Positions 644–656 are enriched in gly residues; that stretch reads GPAGGRGDGGPPG. The segment covering 657-667 has biased composition (low complexity); the sequence is LTGFPGAAGRT. Residues 704–713 show a composition bias toward gly residues; sequence GETGAGGPPG. Low complexity-rich tracts occupy residues 721–748 and 756–781; these read SGEP…LGLP and LPGV…RGPS. A compositionally biased stretch (basic and acidic residues) spans 795 to 807; the sequence is AGRDGLPGHKGER. 2 stretches are compositionally biased toward low complexity: residues 809–831 and 840–860; these read YAGN…VGPA and PGPA…PSGP. Positions 864 to 874 are enriched in basic and acidic residues; that stretch reads RGDKGEGDKGP.

Belongs to the fibrillar collagen family. Trimers of one alpha 2(I) and two alpha 1(I) chains. Interacts (via C-terminus) with TMEM131 (via PapD-L domain); the interaction is direct and is involved in assembly and TRAPPIII ER-to-Golgi transport complex-dependent secretion of collagen. Post-translationally, prolines at the third position of the tripeptide repeating unit (G-X-Y) are hydroxylated in some or all of the chains. Expressed in bones.

Its subcellular location is the secreted. It localises to the extracellular space. The protein resides in the extracellular matrix. In terms of biological role, type I collagen is a member of group I collagen (fibrillar forming collagen). In Glyptodon sp. (strain SLP-2019) (Giant armadillo), this protein is Collagen alpha-2(I) chain.